A 132-amino-acid chain; its full sequence is D-ribose pyranase (132 aa).

Residue His20 is the Proton donor of the active site. Residues Asp28, His99, and 121–123 (YSN) each bind substrate.

The protein belongs to the RbsD / FucU family. RbsD subfamily. As to quaternary structure, homodecamer.

It localises to the cytoplasm. It carries out the reaction beta-D-ribopyranose = beta-D-ribofuranose. It participates in carbohydrate metabolism; D-ribose degradation; D-ribose 5-phosphate from beta-D-ribopyranose: step 1/2. In terms of biological role, catalyzes the interconversion of beta-pyran and beta-furan forms of D-ribose. This chain is D-ribose pyranase, found in Streptococcus uberis (strain ATCC BAA-854 / 0140J).